Reading from the N-terminus, the 430-residue chain is RNA-binding protein 34 (430 aa).

Disordered regions lie at residues 1–55 (MALE…GTGR), 72–123 (VPVP…ADRE), and 134–153 (EIHQ…VKVA). Ser14, Ser28, and Ser99 each carry phosphoserine. Positions 23 to 34 (DGVRGSPPEDYR) are enriched in basic and acidic residues. Residues 113–123 (TNAEKKLADRE) show a composition bias toward basic and acidic residues. Lys151 is modified (N6-acetyllysine). 2 consecutive RRM domains span residues 185-280 (RTVF…LASE) and 287-364 (RSVF…RSVN). Residue Lys242 forms a Glycyl lysine isopeptide (Lys-Gly) (interchain with G-Cter in SUMO2) linkage. Position 288 is a phosphoserine (Ser288). 2 disordered regions span residues 365-395 (KEKF…KTAE) and 411-430 (KTKK…RKQK).

Belongs to the RRM RBM34 family.

The protein resides in the nucleus. Its subcellular location is the nucleolus. The polypeptide is RNA-binding protein 34 (RBM34) (Homo sapiens (Human)).